The primary structure comprises 238 residues: Tabinhibitin 5 (238 aa).

Positions 1–23 (MTSILVSRFLLAALVLQYATIDA) are cleaved as a signal peptide. The short motif at 32-34 (RGD) is the Cell attachment site element. One can recognise an SCP domain in the interval 67–211 (LSKINDVRDH…KARALLTCNF (145 aa)).

This sequence belongs to the CRISP family. As to expression, expressed in salivary glands.

It localises to the secreted. Inhibits platelet aggregation induced by all agonists tested (ADP, arachidonic acid, the thromboxane A2 analog U46619, thrombin, and snake venom snaclecs (TMVA that activates platelet through GPIB, and stejnulxin that specifically acts through GPVI (GP6))). May act by competing with fibrinogen for binding to glycoprotein IIb/IIIa (ITGA2B/ITGB3). The protein is Tabinhibitin 5 of Tabanus yao (Horsefly).